The primary structure comprises 1048 residues: [F-actin]-monooxygenase MICAL1 (1048 aa).

The monooxygenase domain stretch occupies residues 1–489 (MASPASTNPA…QDLYDMMDKE (489 aa)). FAD-binding positions include C95, 114–116 (EKR), 121–123 (RHN), F181, Y293, and D393. T475 carries the post-translational modification Phosphothreonine. A compositionally biased stretch (basic and acidic residues) spans 488–502 (KEHAQRKSDEPDSRK). A disordered region spans residues 488–508 (KEHAQRKSDEPDSRKTTTGSA). The Calponin-homology (CH) domain occupies 507-611 (SAGTEELLHW…YLSHFHSAFK (105 aa)). Residue S616 is modified to Phosphoserine. Residues 643-676 (TRAKVDEETPSTEEPPVSEPSMSPNTPELSEHQE) are disordered. The segment covering 654–666 (TEEPPVSEPSMSP) has biased composition (low complexity). The region spanning 681–743 (ELCELCGKHL…LQHLPQEDQK (63 aa)) is the LIM zinc-binding domain. Zn(2+) contacts are provided by C683, C686, H704, C707, C710, C713, C733, and H736. 3 disordered regions span residues 741-787 (DQKE…QPAR), 805-825 (IIPD…SDLA), and 839-873 (PVQA…PPLE). Positions 747 to 765 (NNGSLESQELPTPGDSNMQ) are enriched in polar residues. Over residues 772–787 (PVTRVSPVPSPSQPAR) the composition is skewed to low complexity. A phosphoserine mark is found at S777 and S781. Coiled coils occupy residues 847–867 (EAIE…EEEE), 906–949 (EEEM…ESSS), and 974–1031 (EEAE…VNQR). Over residues 852 to 868 (GDDEEEEEEEEEEEEEP) the composition is skewed to acidic residues. The region spanning 905–1048 (KEEEMKRFCK…EERRLREMPA (144 aa)) is the bMERB domain.

Belongs to the Mical family. As to quaternary structure, associates with the SH3 domain of NEDD9. Interacts with VIM and PLXNA3. Interacts with RAB1B, RAB8A, RAB10, RAB13 and RAB15 (in their GTP-bound forms); binding to RAB1B is of low affinity compared to other Rab proteins; at least in case of RAB8A and RAB10 can bind 2 molecules of the Rab proteins simultaneously. Interacts with STK38 and STK38L. Interacts with GRAF1/ARHGAP26, GRAF2/ARHGAP10, RAB8A, RAB8B and RAB10; may bind simultaneously to GRAFs and Rabs and connects GRAFs to Rabs. Does not interact with RAB1 and RAB11A. It depends on FAD as a cofactor. In terms of tissue distribution, expressed in the postnatal and adult hippocampus; found in dentate gyrus, the polymorphic layer, cornu ammonis (CA) 1-3 and in mossy fibers of the striatum lucidum. In adult hippocampus strongly expressed in CA3 pyramidial neurons.

Its subcellular location is the cytoplasm. It localises to the cytoskeleton. The protein localises to the endosome membrane. The protein resides in the midbody. It catalyses the reaction L-methionyl-[F-actin] + NADPH + O2 + H(+) = L-methionyl-(R)-S-oxide-[F-actin] + NADP(+) + H2O. The catalysed reaction is NADPH + O2 + H(+) = H2O2 + NADP(+). Its function is as follows. Monooxygenase that promotes depolymerization of F-actin by mediating oxidation of specific methionine residues on actin to form methionine-sulfoxide, resulting in actin filament disassembly and preventing repolymerization. In the absence of actin, it also functions as a NADPH oxidase producing H(2)O(2). Acts as a cytoskeletal regulator that connects NEDD9 to intermediate filaments. Also acts as a negative regulator of apoptosis via its interaction with STK38 and STK38L; acts by antagonizing STK38 and STK38L activation by MST1/STK4. Involved in regulation of lamina-specific connectivity in the nervous system such as the development of lamina-restricted hippocampal connections. Through redox regulation of the actin cytoskeleton controls the intracellular distribution of secretory vesicles containing L1/neurofascin/NgCAM family proteins in neurons, thereby regulating their cell surface levels. May act as Rab effector protein and play a role in vesicle trafficking. Promotes endosomal tubule extension by associating with RAB8 (RAB8A or RAB8B), RAB10 and GRAF (GRAF1/ARHGAP26 or GRAF2/ARHGAP10) on the endosomal membrane which may connect GRAFs to Rabs, thereby participating in neosynthesized Rab8-Rab10-Rab11-dependent protein export. In Mus musculus (Mouse), this protein is [F-actin]-monooxygenase MICAL1 (Mical1).